We begin with the raw amino-acid sequence, 385 residues long: 1-deoxy-D-xylulose 5-phosphate reductoisomerase (385 aa).

Positions 10, 11, 13, 36, and 38 each coordinate NADPH. Position 123 (lysine 123) interacts with 1-deoxy-D-xylulose 5-phosphate. Glutamate 124 contributes to the NADPH binding site. Aspartate 148 lines the Mn(2+) pocket. Serine 149, glutamate 150, serine 172, and histidine 195 together coordinate 1-deoxy-D-xylulose 5-phosphate. Glutamate 150 is a Mn(2+) binding site. Residue glycine 201 participates in NADPH binding. 1-deoxy-D-xylulose 5-phosphate-binding residues include serine 208, asparagine 213, lysine 214, and glutamate 217. Residue glutamate 217 coordinates Mn(2+).

This sequence belongs to the DXR family. Mg(2+) serves as cofactor. It depends on Mn(2+) as a cofactor.

It catalyses the reaction 2-C-methyl-D-erythritol 4-phosphate + NADP(+) = 1-deoxy-D-xylulose 5-phosphate + NADPH + H(+). It participates in isoprenoid biosynthesis; isopentenyl diphosphate biosynthesis via DXP pathway; isopentenyl diphosphate from 1-deoxy-D-xylulose 5-phosphate: step 1/6. Its function is as follows. Catalyzes the NADPH-dependent rearrangement and reduction of 1-deoxy-D-xylulose-5-phosphate (DXP) to 2-C-methyl-D-erythritol 4-phosphate (MEP). The sequence is that of 1-deoxy-D-xylulose 5-phosphate reductoisomerase from Anaplasma phagocytophilum (strain HZ).